We begin with the raw amino-acid sequence, 261 residues long: tRNA pseudouridine synthase A (261 aa).

Asp51 serves as the catalytic Nucleophile. Tyr109 serves as a coordination point for substrate.

It belongs to the tRNA pseudouridine synthase TruA family. As to quaternary structure, homodimer.

It catalyses the reaction uridine(38/39/40) in tRNA = pseudouridine(38/39/40) in tRNA. Formation of pseudouridine at positions 38, 39 and 40 in the anticodon stem and loop of transfer RNAs. In Tolumonas auensis (strain DSM 9187 / NBRC 110442 / TA 4), this protein is tRNA pseudouridine synthase A.